Reading from the N-terminus, the 453-residue chain is Serine/threonine-protein phosphatase 2A regulatory subunit B'' subunit gamma (453 aa).

The segment at 1–27 (MDWKDVLRRRLASPNSDPKRKKSEQEL) is disordered. 2 EF-hand domains span residues 273–308 (PSALRVYGQYLNLDKDHNGMLSKEELSRYGTATMTN) and 341–376 (KEPAALQYIFKLLDIENKGYLNVFSLNYFFRAIQEL). Ca(2+)-binding residues include aspartate 286, aspartate 288, asparagine 290, methionine 292, and glutamate 297.

In terms of assembly, interacts with MCM3AP/GANP, PPP5C, and the phosphatase 2A core enzyme composed of the PPP2CA catalytic subunit and the constant regulatory subunit PPP2R1A. Finds in a complex with ABCB1, TFPI2 and PPP2R3C; leading to the dephosphorylation of ABCB1.

The protein localises to the nucleus. Its subcellular location is the cytoplasm. May regulate MCM3AP phosphorylation through phosphatase recruitment. May act as a negative regulator of ABCB1 expression and function through the dephosphorylation of ABCB1 by TFPI2/PPP2R3C complex. May play a role in the activation-induced cell death of B-cells. The sequence is that of Serine/threonine-protein phosphatase 2A regulatory subunit B'' subunit gamma (Ppp2r3c) from Rattus norvegicus (Rat).